The primary structure comprises 141 residues: Large ribosomal subunit protein uL11 (141 aa).

This sequence belongs to the universal ribosomal protein uL11 family. Part of the ribosomal stalk of the 50S ribosomal subunit. Interacts with L10 and the large rRNA to form the base of the stalk. L10 forms an elongated spine to which L12 dimers bind in a sequential fashion forming a multimeric L10(L12)X complex. Post-translationally, one or more lysine residues are methylated.

Forms part of the ribosomal stalk which helps the ribosome interact with GTP-bound translation factors. In Roseobacter denitrificans (strain ATCC 33942 / OCh 114) (Erythrobacter sp. (strain OCh 114)), this protein is Large ribosomal subunit protein uL11.